The primary structure comprises 291 residues: 4-hydroxy-tetrahydrodipicolinate synthase (291 aa).

Threonine 45 contributes to the pyruvate binding site. Residue tyrosine 133 is the Proton donor/acceptor of the active site. The active-site Schiff-base intermediate with substrate is the lysine 161. Position 203 (isoleucine 203) interacts with pyruvate.

This sequence belongs to the DapA family. As to quaternary structure, homotetramer; dimer of dimers.

The protein localises to the cytoplasm. The catalysed reaction is L-aspartate 4-semialdehyde + pyruvate = (2S,4S)-4-hydroxy-2,3,4,5-tetrahydrodipicolinate + H2O + H(+). It functions in the pathway amino-acid biosynthesis; L-lysine biosynthesis via DAP pathway; (S)-tetrahydrodipicolinate from L-aspartate: step 3/4. Catalyzes the condensation of (S)-aspartate-beta-semialdehyde [(S)-ASA] and pyruvate to 4-hydroxy-tetrahydrodipicolinate (HTPA). The polypeptide is 4-hydroxy-tetrahydrodipicolinate synthase (Acidithiobacillus ferrooxidans (strain ATCC 23270 / DSM 14882 / CIP 104768 / NCIMB 8455) (Ferrobacillus ferrooxidans (strain ATCC 23270))).